Here is a 566-residue protein sequence, read N- to C-terminus: 3'-5' exoribonuclease parn-1 (566 aa).

Residues Asp29, Glu31, Asp283, and Asp379 each coordinate a divalent metal cation.

This sequence belongs to the CAF1 family. A divalent metal cation is required as a cofactor. In terms of tissue distribution, expressed in germline cells.

Its subcellular location is the cytoplasm. Functionally, involved in transcriptome surveillance. Required for piwi-interacting RNAs (piRNAs) 3'-end trimming, which is important for both fertility and piRNA-directed gene silencing. Has 3' to 5' exonuclease activity in vitro. The protein is 3'-5' exoribonuclease parn-1 of Caenorhabditis elegans.